We begin with the raw amino-acid sequence, 243 residues long: Protein canopy homolog 3 (243 aa).

Positions 1–15 (MWFLFLLLPLWAGCA) are cleaved as a signal peptide. The Saposin B-type domain maps to 27 to 236 (SKCEVCKYVA…KEEKKQMDQP (210 aa)). Intrachain disulfides connect Cys-29-Cys-188, Cys-32-Cys-176, and Cys-86-Cys-148. A coiled-coil region spans residues 136–160 (ETSAEVADMKKQCDVMMENYEEVIE). The disordered stretch occupies residues 186–243 (QSCLSEQGDSRKGDTGPSTGTKKQKKQGEKKNKSKKQNSGSKEEKKQMDQPMAAKEEL). The span at 226–243 (SKEEKKQMDQPMAAKEEL) shows a compositional bias: basic and acidic residues.

It belongs to the canopy family.

Its subcellular location is the endoplasmic reticulum. Its function is as follows. Toll-like receptor (TLR)-specific co-chaperone for HSP90B1. Required for proper TLR folding and hence controls TLR exit from the endoplasmic reticulum. Consequently, required for immune responses. In Xenopus laevis (African clawed frog), this protein is Protein canopy homolog 3 (cnpy3).